A 247-amino-acid polypeptide reads, in one-letter code: C-type lectin domain family 7 member A (247 aa).

The Cytoplasmic segment spans residues M1–R44. An ITAM-like motif is present at residues Y15–L18. The chain crosses the membrane as a helical; Signal-anchor for type II membrane protein span at residues L45 to G65. The Extracellular segment spans residues T66–M247. The tract at residues N81–T105 is disordered. A glycan (N-linked (GlcNAc...) asparagine) is linked at N91. Over residues S93–T105 the composition is skewed to polar residues. Disulfide bonds link C120–C131, C148–C241, and C220–C233. In terms of domain architecture, C-type lectin spans Y127–E242. Residue R146–S153 coordinates (1,3-beta-D-glucosyl)n. 3 residues coordinate a divalent metal cation: K157, D159, and E163. Position 195 (E195) interacts with (1,3-beta-D-glucosyl)n. E242 provides a ligand contact to a divalent metal cation.

In terms of assembly, homodimer. Interacts with SYK; participates in leukocyte activation in presence of fungal pathogens. Interacts with CD37; this interaction controls CLEC7A-mediated IL-6 production. Post-translationally, phosphorylated on tyrosine residues in response to beta-glucan binding. In terms of tissue distribution, detected in dendritic cells, in paracortical and medullary regions of lymph nodes, and in spleen red pulp and white pulp.

It localises to the cell membrane. Lectin that functions as a pattern recognizing receptor (PRR) specific for beta-1,3-linked and beta-1,6-linked glucans, which constitute cell wall constituents from pathogenic bacteria and fungi. Necessary for the TLR2-mediated inflammatory response and activation of NF-kappa-B: upon beta-glucan binding, recruits SYK via its ITAM motif and promotes a signaling cascade that activates some CARD domain-BCL10-MALT1 (CBM) signalosomes, leading to the activation of NF-kappa-B and MAP kinase p38 (MAPK11, MAPK12, MAPK13 and/or MAPK14) pathways which stimulate expression of genes encoding pro-inflammatory cytokines and chemokines. Enhances cytokine production in macrophages and dendritic cells. Mediates production of reactive oxygen species in the cell. Mediates phagocytosis of C.albicans conidia. Binds T-cells in a way that does not involve their surface glycans and plays a role in T-cell activation. Stimulates T-cell proliferation. Induces phosphorylation of SCIMP after binding beta-glucans. The sequence is that of C-type lectin domain family 7 member A (CLEC7A) from Macaca mulatta (Rhesus macaque).